A 703-amino-acid polypeptide reads, in one-letter code: Lethal(3)malignant brain tumor-like protein 2 (703 aa).

Residues 1-70 (MEKPRGTEET…AGELPTSPLH (70 aa)) are disordered. Ser-13 carries the phosphoserine modification. A compositionally biased stretch (acidic residues) spans 15-25 (PMEEEEDDDLE). Low complexity predominate over residues 35-49 (SYNSSAGSESSSYLE). The span at 50-60 (ESSEAENEDRE) shows a compositional bias: acidic residues. Residue Ser-67 is modified to Phosphoserine. The FCS-type zinc finger occupies 81-116 (DGSGSEPAVCEMCGIVGTREAFFSKTKRFCSVSCSR). Zn(2+)-binding residues include Cys-90, Cys-93, Cys-110, and Cys-114. MBT repeat units lie at residues 179-283 (FDWG…LVPP), 291-391 (TDWK…IKMS), 397-500 (MSHH…LTPP), and 508-604 (FDWE…LQPP). Ser-338 carries the phosphoserine modification. A Glycyl lysine isopeptide (Lys-Gly) (interchain with G-Cter in SUMO2) cross-link involves residue Lys-405. Disordered regions lie at residues 604 to 649 (PVSA…KKPL) and 672 to 703 (VKEEHQDLPSPDRSPSPLLPLPTESIKQERDS). Over residues 619–634 (TKKKKKQFGKKRKRIP) the composition is skewed to basic residues. Glycyl lysine isopeptide (Lys-Gly) (interchain with G-Cter in SUMO2) cross-links involve residues Lys-647 and Lys-673. Phosphoserine is present on residues Ser-681, Ser-685, and Ser-687. Lys-698 participates in a covalent cross-link: Glycyl lysine isopeptide (Lys-Gly) (interchain with G-Cter in SUMO1); alternate. Lys-698 participates in a covalent cross-link: Glycyl lysine isopeptide (Lys-Gly) (interchain with G-Cter in SUMO2); alternate.

Part of the E2F6.com-1 complex in G0 phase composed of E2F6, MGA, MAX, TFDP1, CBX3, BAT8, EUHMTASE1, RING1, RNF2, MBLR, BAT8 and YAF2.

The protein localises to the nucleus. Its function is as follows. Putative Polycomb group (PcG) protein. PcG proteins maintain the transcriptionally repressive state of genes, probably via a modification of chromatin, rendering it heritably changed in its expressibility. Its association with a chromatin-remodeling complex suggests that it may contribute to prevent expression of genes that trigger the cell into mitosis. Binds to monomethylated and dimethylated 'Lys-20' on histone H4. Binds histone H3 peptides that are monomethylated or dimethylated on 'Lys-4', 'Lys-9' or 'Lys-27'. This Rattus norvegicus (Rat) protein is Lethal(3)malignant brain tumor-like protein 2 (L3mbtl2).